The following is a 155-amino-acid chain: MKIQLIAVGQKMPDWVKVGFEEYQRRFPKDMPFELIEIPAGKRGKNADIKRILEQEGKAMLAAAGKGKVVTLDIPGKPWTTEQLASQLEAWKNDGRDVCLLIGGPEGLSPECKAAAEKSWSLSPLTLPHPMVRVIVAESLYRAWSLTTNHPYHRE.

Residues leucine 72, glycine 103, and 122–127 (LSPLTL) contribute to the S-adenosyl-L-methionine site.

The protein belongs to the RNA methyltransferase RlmH family. Homodimer.

It is found in the cytoplasm. It catalyses the reaction pseudouridine(1915) in 23S rRNA + S-adenosyl-L-methionine = N(3)-methylpseudouridine(1915) in 23S rRNA + S-adenosyl-L-homocysteine + H(+). Functionally, specifically methylates the pseudouridine at position 1915 (m3Psi1915) in 23S rRNA. The sequence is that of Ribosomal RNA large subunit methyltransferase H from Actinobacillus pleuropneumoniae serotype 3 (strain JL03).